The following is a 444-amino-acid chain: Phosphoglucosamine mutase (444 aa).

The active-site Phosphoserine intermediate is the serine 99. The Mg(2+) site is built by serine 99, aspartate 242, aspartate 244, and aspartate 246. Serine 99 bears the Phosphoserine mark.

The protein belongs to the phosphohexose mutase family. Requires Mg(2+) as cofactor. Post-translationally, activated by phosphorylation.

It catalyses the reaction alpha-D-glucosamine 1-phosphate = D-glucosamine 6-phosphate. In terms of biological role, catalyzes the conversion of glucosamine-6-phosphate to glucosamine-1-phosphate. This Aliarcobacter butzleri (strain RM4018) (Arcobacter butzleri) protein is Phosphoglucosamine mutase.